The sequence spans 209 residues: Homeobox protein ceh-2 (209 aa).

A compositionally biased stretch (basic and acidic residues) spans 1 to 14 (MTLKFSVERLVDSE). Disordered stretches follow at residues 1 to 46 (MTLK…KSGK) and 181 to 209 (HKRVRLEGSDPNAPMSNDEDDEDDKKSVS). The segment covering 15 to 24 (KESEEADVEE) has biased composition (acidic residues). Positions 126-185 (NKRIRTAFSASQLIQLEKAFEGNHYVVGNERKQLAAKLSLTETQVKVWFQNRRTKHKRVR) form a DNA-binding region, homeobox.

The protein belongs to the EMX homeobox family. In the anterior pharynx, expressed in the I3 interneuron, the NSM and M3 motor neuron pairs, the three m2 muscle cells and the three e2 epithelial cells (at protein level).

It localises to the nucleus. Required for activity of the M3 pharyngeal motor neuron. This Caenorhabditis elegans protein is Homeobox protein ceh-2.